The following is a 155-amino-acid chain: Endoribonuclease YbeY (155 aa).

Residues histidine 114, histidine 118, and histidine 124 each coordinate Zn(2+).

The protein belongs to the endoribonuclease YbeY family. The cofactor is Zn(2+).

Its subcellular location is the cytoplasm. Its function is as follows. Single strand-specific metallo-endoribonuclease involved in late-stage 70S ribosome quality control and in maturation of the 3' terminus of the 16S rRNA. The sequence is that of Endoribonuclease YbeY from Escherichia coli O17:K52:H18 (strain UMN026 / ExPEC).